The following is a 989-amino-acid chain: Frequency clock protein (989 aa).

3 disordered regions span residues 1 to 139, 208 to 290, and 331 to 445; these read MADS…PGFR, FAAS…VGTQ, and ISGR…PDRV. A compositionally biased stretch (basic and acidic residues) spans 36–45; it reads ENHRLARDTS. Positions 46-88 are enriched in polar residues; that stretch reads SRVTSSSALGVTESQPQLKSSPTRRNSSGESEPTNWFNQSNRN. Basic and acidic residues predominate over residues 109-119; it reads KETDSSNEESR. The segment covering 233–255 has biased composition (low complexity); that stretch reads HSSGVSLSKHDSSSSSRSRPVDS. Polar residues-rich tracts occupy residues 256 to 274 and 334 to 343; these read AYNS…SSGP and RNMQRNQSMP. The span at 377–386 shows a compositional bias: basic and acidic residues; sequence DNPRKNRSSK. Polar residues predominate over residues 387 to 397; the sequence is DNGSASNSGGD. Residues 402 to 418 show a composition bias toward gly residues; sequence GGTGTGSGDGSGSGGRT. Over residues 433–444 the composition is skewed to basic and acidic residues; the sequence is RPTRPRDLDPDR. The residue at position 501 (Thr-501) is a Phosphothreonine. A phosphoserine mark is found at Ser-513 and Ser-519. Disordered regions lie at residues 524 to 642, 865 to 907, and 968 to 989; these read KIRW…QRRK, WDDG…TYMR, and SVAT…VSSS. A Nuclear localization signal motif is present at residues 564-568; sequence RKKRK. A compositionally biased stretch (polar residues) spans 598-615; that stretch reads RNSSSIETSLEESMSQGS. The span at 865–886 shows a compositional bias: acidic residues; it reads WDDGDDLASDDEEVEEVEEDSY. A compositionally biased stretch (polar residues) spans 978 to 989; sequence GYSSSMEDVSSS.

It belongs to the FRQ family. Progressive phosphorylation during the late circadian day and early night. Phosphorylation is also involved in regulating frq degradation. Phosphorylation by CKII may have at least three functions; it decreases the stability of frq, reduces the protein complex formation between frq and the white collar proteins, and is important for the closing of the Neurospora circadian negative feedback loop.

Its subcellular location is the nucleus. In terms of biological role, circadian clock component involved in the generation of biological rhythms, in particular in rhythm stability, period length, and temperature compensation. Oscillates in abundance with a daily peak early in the morning. Behaves as a negative element in circadian transcriptional loop. May bind to wc-2 protein. The complex frq-wc-2 may turn off the expression of frq. The protein is Frequency clock protein (frq) of Neurospora crassa (strain ATCC 24698 / 74-OR23-1A / CBS 708.71 / DSM 1257 / FGSC 987).